The chain runs to 287 residues: Stomatin-like protein 3 (287 aa).

Ser3 bears the Phosphoserine mark. A helical; Signal-anchor for type III membrane protein transmembrane segment spans residues 25–45 (WILFFLSFLLMLVTFPISVWM). The Cytoplasmic segment spans residues 46 to 287 (CLKIIKEYER…GNNKKVTAKA (242 aa)). The residue at position 237 (Ser237) is a Phosphoserine.

The protein belongs to the band 7/mec-2 family. Homodimer. Interacts with PIEZO1 and PIEZO2. As to expression, expressed by all dorsal root ganglion neurons and is selectively expressed in neuronal tissues. Detected in olfactory epithelium.

It is found in the cell membrane. Required for the function of many mechanoreceptors. Modulate mechanotransduction channels and acid-sensing ion channels (ASIC) proteins. Potentiates PIEZO1 and PIEZO2 function by increasing their sensitivity to mechanical stimulations. In Mus musculus (Mouse), this protein is Stomatin-like protein 3 (Stoml3).